The sequence spans 329 residues: Phenylalanine--tRNA ligase alpha subunit (329 aa).

Glu254 contributes to the Mg(2+) binding site.

Belongs to the class-II aminoacyl-tRNA synthetase family. Phe-tRNA synthetase alpha subunit type 1 subfamily. As to quaternary structure, tetramer of two alpha and two beta subunits. Mg(2+) is required as a cofactor.

Its subcellular location is the cytoplasm. It carries out the reaction tRNA(Phe) + L-phenylalanine + ATP = L-phenylalanyl-tRNA(Phe) + AMP + diphosphate + H(+). In Histophilus somni (strain 129Pt) (Haemophilus somnus), this protein is Phenylalanine--tRNA ligase alpha subunit.